Consider the following 445-residue polypeptide: Phosphoglucosamine mutase (445 aa).

The active-site Phosphoserine intermediate is Ser-102. Residues Ser-102, Asp-241, Asp-243, and Asp-245 each contribute to the Mg(2+) site. Phosphoserine is present on Ser-102.

It belongs to the phosphohexose mutase family. Mg(2+) serves as cofactor. Post-translationally, activated by phosphorylation.

The catalysed reaction is alpha-D-glucosamine 1-phosphate = D-glucosamine 6-phosphate. In terms of biological role, catalyzes the conversion of glucosamine-6-phosphate to glucosamine-1-phosphate. This Rhodococcus erythropolis (strain PR4 / NBRC 100887) protein is Phosphoglucosamine mutase.